Reading from the N-terminus, the 242-residue chain is Probable transcriptional regulatory protein BURPS1710b_1385 (242 aa).

The protein belongs to the TACO1 family.

It is found in the cytoplasm. This is Probable transcriptional regulatory protein BURPS1710b_1385 from Burkholderia pseudomallei (strain 1710b).